We begin with the raw amino-acid sequence, 449 residues long: Trigger factor (449 aa).

The region spanning 173–258 is the PPIase FKBP-type domain; the sequence is GDRVTVDFVG…MKKVEWPHLP (86 aa).

This sequence belongs to the FKBP-type PPIase family. Tig subfamily.

The protein resides in the cytoplasm. The catalysed reaction is [protein]-peptidylproline (omega=180) = [protein]-peptidylproline (omega=0). In terms of biological role, involved in protein export. Acts as a chaperone by maintaining the newly synthesized protein in an open conformation. Functions as a peptidyl-prolyl cis-trans isomerase. This Burkholderia thailandensis (strain ATCC 700388 / DSM 13276 / CCUG 48851 / CIP 106301 / E264) protein is Trigger factor.